Consider the following 313-residue polypeptide: tRNA dimethylallyltransferase (313 aa).

17 to 24 contributes to the ATP binding site; sequence GPTASGKT. 19-24 is a substrate binding site; that stretch reads TASGKT. Interaction with substrate tRNA regions lie at residues 42–45, 166–170, 247–252, and 280–287; these read DSAL, QRLSR, RCVGYR, and KRQITWLR.

The protein belongs to the IPP transferase family. In terms of assembly, monomer. Mg(2+) is required as a cofactor.

It catalyses the reaction adenosine(37) in tRNA + dimethylallyl diphosphate = N(6)-dimethylallyladenosine(37) in tRNA + diphosphate. Functionally, catalyzes the transfer of a dimethylallyl group onto the adenine at position 37 in tRNAs that read codons beginning with uridine, leading to the formation of N6-(dimethylallyl)adenosine (i(6)A). The sequence is that of tRNA dimethylallyltransferase from Photorhabdus laumondii subsp. laumondii (strain DSM 15139 / CIP 105565 / TT01) (Photorhabdus luminescens subsp. laumondii).